We begin with the raw amino-acid sequence, 1472 residues long: Type IV pilus biogenesis factor PilY1 homolog PD_1611 (1472 aa).

Residues Asp1170, Asp1172, Asp1174, Leu1176, and Asp1178 each coordinate Ca(2+). Polar residues predominate over residues 1383-1397; it reads RGSRSSIGNSDTGAV. The interval 1383–1403 is disordered; that stretch reads RGSRSSIGNSDTGAVSTGGDA.

It belongs to the PilY1 family.

Its subcellular location is the fimbrium. One of the three PilY1 homologs of X.fastidiosa, which are involved in bacterial twitching motility as component of the filamentous type IV pili (T4P). The twitching motility of this protein is enhanced by calcium, which may provide the bacterium an adaptive advantage in environments with high calcium concentrations. The protein is Type IV pilus biogenesis factor PilY1 homolog PD_1611 of Xylella fastidiosa (strain Temecula1 / ATCC 700964).